Here is a 104-residue protein sequence, read N- to C-terminus: MAKMMQREITKTTVNVAKMVMVDGEVQVEQLPSETFVGNLTMEQAQWRMKRKYKGEPVQVVSVEPNTEVYELPVEKFLEVATVRVEKDEDQEEQTEAPEEQVAE.

A DNA-binding region spans residues 1–19 (MAKMMQREITKTTVNVAKM). The segment at 85–104 (VEKDEDQEEQTEAPEEQVAE) is disordered. Residues 88–104 (DEDQEEQTEAPEEQVAE) are compositionally biased toward acidic residues.

It belongs to the phi29likevirus histone-like protein p6 family. Homodimer. Homomultimer. Binds to double-stranded DNA giving rise to multimeric nucleoprotein complexes. Binding specificity for the viral DNA is based on supercoiling, the viral genome having a negative superhelicity lower than that of plasmid DNA. Interacts with the DNA replication protein p17; this interaction optimizes the binding of protein p6 at the viral DNA ends, thus favoring the initiation of replication. Interacts with the late genes activator p4 (via C-terminus).

In terms of biological role, histone-like nucleoprotein that binds to the viral dsDNA and responsible for wrapping and compacting the viral DNA about 4-fold. Forms a nucleoprotein complex in which the DNA adopts a right-handed toroidal conformation winding around a protein core. Binds ito most, if not all, the viral genome, although with different affinity, the highest one corresponding to the genome ends. The formation of the nucleoprotein complex at the genome ends, activates the initiation of viral DNA replication. The binding of p6 would recruit the complex formed by the TP and the DNA polymerase to the origin. Protein p6 also represses early transcription from promoter C2, and, together with protein p4, represses transcription from promoters A2b and A2c and activates late transcription from promoter A3. Protein p6 is therefore involved in the early to late transcription switch. The formation of the nucleoprotein complex at the right end of the phage genome where the early promoter C2 is located affects local topology, which may contribute to the promoter repression. This Bacillus subtilis (Bacteriophage phi-29) protein is Histone-like protein p6 (6).